The chain runs to 533 residues: DNA-directed RNA polymerase III subunit RPC3 (533 aa).

Positions 162-181 (LVPDTDSSDRGPPPPAPTLV) are disordered. Residue serine 194 is modified to Phosphoserine. The interval 197–228 (GKGKRRRSSDEDATGEPKAKKPRYTDNKEPSP) is disordered. The span at 211–227 (GEPKAKKPRYTDNKEPS) shows a compositional bias: basic and acidic residues.

The protein belongs to the eukaryotic RPC3/POLR3C RNA polymerase subunit family. Component of the RNA polymerase III complex consisting of 17 subunits: a ten-subunit horseshoe-shaped catalytic core composed of POLR3A/RPC1, POLR3B/RPC2, POLR1C/RPAC1, POLR1D/RPAC2, POLR3K/RPC10, POLR2E/RPABC1, POLR2F/RPABC2, POLR2H/RPABC3, POLR2K/RPABC4 and POLR2L/RPABC5; a mobile stalk composed of two subunits POLR3H/RPC8 and CRCP/RPC9, protruding from the core and functioning primarily in transcription initiation; and additional subunits homologous to general transcription factors of the RNA polymerase II machinery, POLR3C/RPC3-POLR3F/RPC6-POLR3G/RPC7 heterotrimer required for transcription initiation and POLR3D/RPC4-POLR3E/RPC5 heterodimer involved in both transcription initiation and termination. Directly interacts with POLR3G/RPC7 and POLR3GL. Directly interacts with POLR3F/RPC6. Interacts with GTF3C4. As part of the RNA polymerase III complex, interacts with PKP2.

The protein localises to the nucleus. Functionally, DNA-dependent RNA polymerase catalyzes the transcription of DNA into RNA using the four ribonucleoside triphosphates as substrates. Specific peripheric component of RNA polymerase III (Pol III) which synthesizes small non-coding RNAs including 5S rRNA, snRNAs, tRNAs and miRNAs from at least 500 distinct genomic loci. Part of POLR3C/RPC3-POLR3F/RPC6-POLR3G/RPC7 heterotrimer, coordinates the dynamics of Pol III stalk and clamp modules during the transition from apo to elongation state. Pol III plays a key role in sensing and limiting infection by intracellular bacteria and DNA viruses. Acts as a nuclear and cytosolic DNA sensor involved in innate immune response. Can sense non-self dsDNA that serves as template for transcription into dsRNA. The non-self RNA polymerase III transcripts, such as Epstein-Barr virus-encoded RNAs (EBERs) induce type I interferon and NF-kappa-B through the RIG-I pathway. Preferentially binds single-stranded DNA (ssDNA) in a sequence-independent manner. This chain is DNA-directed RNA polymerase III subunit RPC3, found in Mus musculus (Mouse).